A 77-amino-acid chain; its full sequence is Acyl carrier protein (77 aa).

One can recognise a Carrier domain in the interval 1–76; the sequence is MDREQRIKEI…DVINYLNEKL (76 aa). Residue Ser-36 is modified to O-(pantetheine 4'-phosphoryl)serine.

This sequence belongs to the acyl carrier protein (ACP) family. Post-translationally, 4'-phosphopantetheine is transferred from CoA to a specific serine of apo-ACP by AcpS. This modification is essential for activity because fatty acids are bound in thioester linkage to the sulfhydryl of the prosthetic group.

The protein localises to the cytoplasm. Its pathway is lipid metabolism; fatty acid biosynthesis. Functionally, carrier of the growing fatty acid chain in fatty acid biosynthesis. The protein is Acyl carrier protein of Hydrogenobaculum sp. (strain Y04AAS1).